The following is a 422-amino-acid chain: Tyrosine--tRNA ligase (422 aa).

Tyr-37 contributes to the L-tyrosine binding site. The 'HIGH' region motif lies at 42 to 51; sequence PTEESLHIGH. Residues Tyr-175 and Gln-179 each contribute to the L-tyrosine site. A 'KMSKS' region motif is present at residues 235 to 239; sequence KFGKT. Lys-238 provides a ligand contact to ATP. Positions 357-414 constitute an S4 RNA-binding domain; sequence KDLQEALVLTSLAQSRTQAKNMIISNSISINTEKIRKNHIFHEKDKLFGKFTLLSRGK.

The protein belongs to the class-I aminoacyl-tRNA synthetase family. TyrS type 1 subfamily. In terms of assembly, homodimer.

The protein localises to the cytoplasm. The catalysed reaction is tRNA(Tyr) + L-tyrosine + ATP = L-tyrosyl-tRNA(Tyr) + AMP + diphosphate + H(+). Its function is as follows. Catalyzes the attachment of tyrosine to tRNA(Tyr) in a two-step reaction: tyrosine is first activated by ATP to form Tyr-AMP and then transferred to the acceptor end of tRNA(Tyr). This Buchnera aphidicola subsp. Acyrthosiphon pisum (strain 5A) protein is Tyrosine--tRNA ligase.